Here is a 645-residue protein sequence, read N- to C-terminus: Cyclic nucleotide-gated channel rod photoreceptor subunit alpha (645 aa).

The Cytoplasmic segment spans residues 1–121 (MKVGVIETHH…PAGNMYYNWL (121 aa)). The disordered stretch occupies residues 53-100 (NNNSNKDEEKKKKKEKKSKSENKKDGERQKNKEKKEKHKNKDKKKGKE). Residues 70-86 (SKSENKKDGERQKNKEK) are compositionally biased toward basic and acidic residues. Positions 87–96 (KEKHKNKDKK) are enriched in basic residues. The helical transmembrane segment at 122 to 143 (FCITMPVMYNWTMIIARACFDE) threads the bilayer. Topologically, residues 144–153 (LQNDYLAVWF) are extracellular. The chain crosses the membrane as a helical span at residues 154-174 (IVDYVSDVIYIADMFVRTRTG). Residues 175-199 (YLEQGLLVKEEQKLKEKYKSSLQFK) lie on the Cytoplasmic side of the membrane. Residues 200-218 (LDFLSIIPTDLLYFKLGLN) form a helical membrane-spanning segment. The Extracellular portion of the chain corresponds to 219 to 223 (YPELR). The chain crosses the membrane as a helical span at residues 224-242 (INRLLRVARMFEFFQRTET). The Cytoplasmic segment spans residues 243–249 (RTNYPNI). Residues 250-273 (FRISNLVMYIVIIIHWNACVYYSI) traverse the membrane as a helical segment. The Extracellular segment spans residues 274–296 (SKAIGFGADTWVYPNTSHPEFAR). 2 consecutive transmembrane segments (helical) span residues 297 to 331 (LTRKYVYSLYWSTLTLTTIGETPPPVRDSEYFFVV) and 332 to 356 (VDFLVGVLIFATIVGNVGSMISNMN). Residues 357–645 (AARAEFQAKI…TDKPGVTKTE (289 aa)) lie on the Cytoplasmic side of the membrane. 3',5'-cyclic GMP-binding positions include 439 to 561 (LLVE…DGLL), glutamate 498, and arginine 513.

It belongs to the cyclic nucleotide-gated cation channel (TC 1.A.1.5) family.

Its subcellular location is the membrane. In terms of biological role, visual signal transduction is mediated by a G-protein coupled cascade using cGMP as second messenger. This protein can be activated by cGMP which leads to an opening of the cation channel and thereby causing a depolarization of rod photoreceptors. The sequence is that of Cyclic nucleotide-gated channel rod photoreceptor subunit alpha from Gallus gallus (Chicken).